The following is a 523-amino-acid chain: Monocarboxylate transporter 7 (523 aa).

Residues Met-1 to Gly-21 lie on the Cytoplasmic side of the membrane. A helical membrane pass occupies residues Gly-22 to Ile-42. Over Lys-43 to Arg-62 the chain is Extracellular. Residues Ile-63–Val-83 form a helical membrane-spanning segment. Topologically, residues Leu-84–Arg-91 are cytoplasmic. Residues Leu-92–Gln-112 form a helical membrane-spanning segment. Residues Glu-113 to Tyr-118 lie on the Extracellular side of the membrane. Residues Val-119–Ile-139 form a helical membrane-spanning segment. The Cytoplasmic portion of the chain corresponds to Leu-140–Ser-149. A helical membrane pass occupies residues Ile-150–Ile-170. Topologically, residues Met-171–Leu-184 are extracellular. The helical transmembrane segment at Phe-185–Ile-205 threads the bilayer. Over Arg-206–Leu-299 the chain is Cytoplasmic. Phosphoserine is present on residues Ser-234, Ser-237, Ser-240, and Ser-247. The helical transmembrane segment at Phe-300–Ile-320 threads the bilayer. Residues Ser-321 to Ala-330 lie on the Extracellular side of the membrane. The helical transmembrane segment at Phe-331 to Leu-351 threads the bilayer. The Cytoplasmic segment spans residues Asn-352 to Lys-358. A helical transmembrane segment spans residues Ile-359–Ala-379. Residues Thr-380 to Glu-381 lie on the Extracellular side of the membrane. Residues Phe-382–Thr-402 form a helical membrane-spanning segment. Topologically, residues His-403–Gly-423 are cytoplasmic. Residues Val-424–Val-444 traverse the membrane as a helical segment. Residues Asp-445–Arg-452 are Extracellular-facing. The chain crosses the membrane as a helical span at residues Ala-453–Pro-473. The Cytoplasmic segment spans residues Cys-474 to Val-523.

The protein belongs to the major facilitator superfamily. Monocarboxylate porter (TC 2.A.1.13) family. In terms of assembly, forms functional complexes with BSG/CD147 or EMB/GP70 ancillary proteins.

Its subcellular location is the basolateral cell membrane. The catalysed reaction is taurine(out) = taurine(in). Functionally, monocarboxylate transporter selective for taurine. May associate with BSG/CD147 or EMB/GP70 ancillary proteins to mediate facilitative efflux or influx of taurine across the plasma membrane. The transport is pH- and sodium-independent. Rather low-affinity, is likely effective for taurine transport in tissues where taurine is present at high concentrations. In Homo sapiens (Human), this protein is Monocarboxylate transporter 7.